A 213-amino-acid polypeptide reads, in one-letter code: Adenylate kinase (213 aa).

10–15 (GSGKGT) is an ATP binding site. The segment at 30-59 (SVGDLLRNIISSESKLGKGIKDTVESGNLI) is NMP. AMP contacts are provided by residues R36, 57-59 (NLI), 83-86 (GFPR), and Q90. Positions 125 to 160 (DRLTCLDCKSIYSISSFKNTTCAKCKSTRLEKRIDD) are LID. R126 is a binding site for ATP. Residues C129 and C132 each contribute to the Zn(2+) site. 135-136 (IY) serves as a coordination point for ATP. C146 and C149 together coordinate Zn(2+). AMP-binding residues include R157 and R169. L195 provides a ligand contact to ATP.

This sequence belongs to the adenylate kinase family. As to quaternary structure, monomer.

The protein resides in the cytoplasm. The enzyme catalyses AMP + ATP = 2 ADP. Its pathway is purine metabolism; AMP biosynthesis via salvage pathway; AMP from ADP: step 1/1. Catalyzes the reversible transfer of the terminal phosphate group between ATP and AMP. Plays an important role in cellular energy homeostasis and in adenine nucleotide metabolism. The chain is Adenylate kinase from Wolbachia pipientis subsp. Culex pipiens (strain wPip).